Here is an 84-residue protein sequence, read N- to C-terminus: Apovitellenin-1 (84 aa).

The protein belongs to the apovitellenin family. In terms of assembly, monomer.

Protein component of the very low density lipoprotein (VLDL) of egg-laying females. Potent lipoprotein lipase inhibitor, preventing the loss of triglycerides from VLDL on their way from the liver to the growing oocytes. The protein is Apovitellenin-1 of Dromaius novaehollandiae (Emu).